The following is a 323-amino-acid chain: UDP-N-acetylenolpyruvoylglucosamine reductase (323 aa).

The FAD-binding PCMH-type domain occupies 33-214; that stretch reads IGGPAEALFC…LSAVFTLTHG (182 aa). The active-site Proton donor is serine 243. The active site involves glutamate 315.

The protein belongs to the MurB family. FAD is required as a cofactor.

The protein resides in the cytoplasm. The enzyme catalyses UDP-N-acetyl-alpha-D-muramate + NADP(+) = UDP-N-acetyl-3-O-(1-carboxyvinyl)-alpha-D-glucosamine + NADPH + H(+). The protein operates within cell wall biogenesis; peptidoglycan biosynthesis. Functionally, cell wall formation. In Treponema denticola (strain ATCC 35405 / DSM 14222 / CIP 103919 / JCM 8153 / KCTC 15104), this protein is UDP-N-acetylenolpyruvoylglucosamine reductase.